The primary structure comprises 213 residues: Motile sperm domain-containing protein 1 (213 aa).

The region spanning 16-143 is the MSP domain; that stretch reads PVFVFPTELI…KEHLTESLFF (128 aa). Helical transmembrane passes span 159–179 and 191–211; these read SLLT…PTLG and LSVN…MAIL. A Nuclear export signal motif is present at residues 205-208; that stretch reads LITM.

The protein localises to the endoplasmic reticulum membrane. It is found in the golgi apparatus membrane. Plays a role in differentiation and/or proliferation of mesenchymal stem cells. Proposed to be involved in epithelial-to-mesenchymal transition (EMT). However, another study suggests that it is not required for EMT or stem cell self-renewal and acts during later stages of differentiation. This Homo sapiens (Human) protein is Motile sperm domain-containing protein 1 (MOSPD1).